Reading from the N-terminus, the 398-residue chain is Exodeoxyribonuclease 7 large subunit (398 aa).

It belongs to the XseA family. Heterooligomer composed of large and small subunits.

It localises to the cytoplasm. The catalysed reaction is Exonucleolytic cleavage in either 5'- to 3'- or 3'- to 5'-direction to yield nucleoside 5'-phosphates.. Functionally, bidirectionally degrades single-stranded DNA into large acid-insoluble oligonucleotides, which are then degraded further into small acid-soluble oligonucleotides. This Salinibacter ruber (strain DSM 13855 / M31) protein is Exodeoxyribonuclease 7 large subunit.